Reading from the N-terminus, the 142-residue chain is Sorting nexin-3 (142 aa).

In terms of domain architecture, PX spans 21–138 (NFLEIEVRNP…ASFIQDPNWD (118 aa)). A 1,2-diacyl-sn-glycero-3-phospho-(1D-myo-inositol-3-phosphate)-binding residues include arginine 64, serine 66, lysine 90, arginine 95, and arginine 104.

It belongs to the sorting nexin family.

Its subcellular location is the cytoplasm. The protein resides in the golgi apparatus membrane. It is found in the prevacuolar compartment membrane. In terms of biological role, required for retention of late Golgi membrane proteins. Component of the retrieval machinery that functions by direct interaction with the cytosolic tails of certain TGN membrane proteins during the sorting/budding process at the prevacuolar compartment. Binds phosphatidylinositol 3-phosphate (PtdIns(P3)). In Aspergillus fumigatus (strain ATCC MYA-4609 / CBS 101355 / FGSC A1100 / Af293) (Neosartorya fumigata), this protein is Sorting nexin-3 (snx3).